Reading from the N-terminus, the 156-residue chain is Small ribosomal subunit protein uS7 (156 aa).

Belongs to the universal ribosomal protein uS7 family. In terms of assembly, part of the 30S ribosomal subunit. Contacts proteins S9 and S11.

In terms of biological role, one of the primary rRNA binding proteins, it binds directly to 16S rRNA where it nucleates assembly of the head domain of the 30S subunit. Is located at the subunit interface close to the decoding center, probably blocks exit of the E-site tRNA. The sequence is that of Small ribosomal subunit protein uS7 from Hamiltonella defensa subsp. Acyrthosiphon pisum (strain 5AT).